Here is a 289-residue protein sequence, read N- to C-terminus: Ribosomal protein L11 methyltransferase (289 aa).

The S-adenosyl-L-methionine site is built by T135, G156, D179, and N225.

It belongs to the methyltransferase superfamily. PrmA family.

The protein localises to the cytoplasm. It catalyses the reaction L-lysyl-[protein] + 3 S-adenosyl-L-methionine = N(6),N(6),N(6)-trimethyl-L-lysyl-[protein] + 3 S-adenosyl-L-homocysteine + 3 H(+). Methylates ribosomal protein L11. In Chlorobaculum parvum (strain DSM 263 / NCIMB 8327) (Chlorobium vibrioforme subsp. thiosulfatophilum), this protein is Ribosomal protein L11 methyltransferase.